The primary structure comprises 109 residues: MNLDVPYYRLGNHEKVEYIPLKLALNDDTASEPQQFSEPVHKMPINDMVGYDNTTSNVSAGIIILISVVAFIALFLLLYVIYYFVILREQQQYSDSIDTDSPFVFNKFD.

A helical membrane pass occupies residues 61-81; the sequence is GIIILISVVAFIALFLLLYVI.

It localises to the host membrane. Its subcellular location is the virion. Plays an essential role in budded virus production and occlusion body formation. The protein is Protein AC78 (AC78) of Autographa californica nuclear polyhedrosis virus (AcMNPV).